The primary structure comprises 1104 residues: A disintegrin and metalloproteinase with thrombospondin motifs 10 (1104 aa).

The signal sequence occupies residues 1-25; that stretch reads MASACQILRWALALGLGLTFKVTHA. Residues 26–233 constitute a propeptide that is removed on maturation; it reads FRSQDELLSS…SERGQLGLKR (208 aa). N-linked (GlcNAc...) asparagine glycans are attached at residues asparagine 90 and asparagine 222. A Peptidase M12B domain is found at 239–457; sequence RYVETLVVAD…GLGLCLNNRP (219 aa). Cystine bridges form between cysteine 315–cysteine 376, cysteine 351–cysteine 358, cysteine 370–cysteine 452, cysteine 409–cysteine 436, cysteine 479–cysteine 501, cysteine 490–cysteine 508, cysteine 496–cysteine 531, cysteine 521–cysteine 536, cysteine 559–cysteine 596, cysteine 563–cysteine 601, and cysteine 574–cysteine 586. Histidine 392 contributes to the Zn(2+) binding site. Glutamate 393 is an active-site residue. Zn(2+)-binding residues include histidine 396 and histidine 402. The 87-residue stretch at 460-546 folds into the Disintegrin domain; that stretch reads QDFVYPTVAP…VPFGSRPEGV (87 aa). A TSP type-1 1 domain is found at 547 to 602; sequence DGAWGPWTPWGDCSRSCGGGVSSSSRHCDSPRPTIGGKYCLGERRRHRSCNTNDCP. Residues 706–818 are spacer; the sequence is ETIEGVFSPA…PALHYRFNAP (113 aa). N-linked (GlcNAc...) asparagine glycosylation is found at asparagine 740 and asparagine 795. TSP type-1 domains follow at residues 825–885, 888–943, 944–1003, and 1004–1058; these read PPYS…EPCP, WVVG…QGPM, CPPE…RRCP, and PARW…AKCD. Intrachain disulfides connect cysteine 837–cysteine 879, cysteine 841–cysteine 884, and cysteine 852–cysteine 866. Residue asparagine 892 is glycosylated (N-linked (GlcNAc...) asparagine). One can recognise a PLAC domain in the interval 1066–1104; the sequence is GPEECKDVNKVAYCPLVLKFQFCSRAYFRQMCCKTCQGR.

As to quaternary structure, interacts with FBN1; this interaction promotes microfibrils assembly. Zn(2+) is required as a cofactor. In terms of processing, glycosylated. Can be O-fucosylated by POFUT2 on a serine or a threonine residue found within the consensus sequence C1-X(2)-(S/T)-C2-G of the TSP type-1 repeat domains where C1 and C2 are the first and second cysteine residue of the repeat, respectively. Fucosylated repeats can then be further glycosylated by the addition of a beta-1,3-glucose residue by the glucosyltransferase, B3GALTL. Fucosylation mediates the efficient secretion of ADAMTS family members. Can also be C-glycosylated with one or two mannose molecules on tryptophan residues within the consensus sequence W-X-X-W of the TPRs, and N-glycosylated. These other glycosylations can also facilitate secretion. In terms of tissue distribution, widely expressed in adult tissues.

The protein localises to the secreted. The protein resides in the extracellular space. It localises to the extracellular matrix. In terms of biological role, metalloprotease that participate in microfibrils assembly. Microfibrils are extracellular matrix components occurring independently or along with elastin in the formation of elastic tissues. This is A disintegrin and metalloproteinase with thrombospondin motifs 10 (Adamts10) from Mus musculus (Mouse).